The sequence spans 159 residues: Ribosomal RNA large subunit methyltransferase H (159 aa).

S-adenosyl-L-methionine contacts are provided by residues Leu76, Gly108, and 127–132 (FSKMTL).

This sequence belongs to the RNA methyltransferase RlmH family. As to quaternary structure, homodimer.

The protein localises to the cytoplasm. The enzyme catalyses pseudouridine(1915) in 23S rRNA + S-adenosyl-L-methionine = N(3)-methylpseudouridine(1915) in 23S rRNA + S-adenosyl-L-homocysteine + H(+). Specifically methylates the pseudouridine at position 1915 (m3Psi1915) in 23S rRNA. This chain is Ribosomal RNA large subunit methyltransferase H, found in Bacillus cytotoxicus (strain DSM 22905 / CIP 110041 / 391-98 / NVH 391-98).